The chain runs to 419 residues: 3-phosphoshikimate 1-carboxyvinyltransferase (419 aa).

Lys-21, Ser-22, and Arg-26 together coordinate 3-phosphoshikimate. Lys-21 lines the phosphoenolpyruvate pocket. Phosphoenolpyruvate is bound by residues Gly-91 and Arg-119. Ser-164, Ser-165, Gln-166, Ser-191, Asp-305, and Lys-332 together coordinate 3-phosphoshikimate. Gln-166 serves as a coordination point for phosphoenolpyruvate. The active-site Proton acceptor is the Asp-305. Phosphoenolpyruvate is bound by residues Arg-336 and Arg-376.

Belongs to the EPSP synthase family. As to quaternary structure, monomer.

The protein localises to the cytoplasm. The enzyme catalyses 3-phosphoshikimate + phosphoenolpyruvate = 5-O-(1-carboxyvinyl)-3-phosphoshikimate + phosphate. It functions in the pathway metabolic intermediate biosynthesis; chorismate biosynthesis. Catalyzes the transfer of the enolpyruvyl moiety of phosphoenolpyruvate (PEP) to the 5-hydroxyl of shikimate-3-phosphate (S3P) to produce enolpyruvyl shikimate-3-phosphate and inorganic phosphate. This chain is 3-phosphoshikimate 1-carboxyvinyltransferase, found in Methanothermobacter thermautotrophicus (strain ATCC 29096 / DSM 1053 / JCM 10044 / NBRC 100330 / Delta H) (Methanobacterium thermoautotrophicum).